Here is a 310-residue protein sequence, read N- to C-terminus: AMMECR1-like protein (310 aa).

The segment at 26–92 (LSGSGTHSHG…SGALSPLPRP (67 aa)) is disordered. Composition is skewed to polar residues over residues 28–66 (GSGT…NVSD) and 74–84 (SPITRMNTASG). A Phosphoserine modification is found at S74. Residues 97–291 (NSTKNLVVTA…ISYAEYIASR (195 aa)) enclose the AMMECR1 domain.

The protein is AMMECR1-like protein (Ammecr1l) of Mus musculus (Mouse).